Reading from the N-terminus, the 941-residue chain is HMG box transcription factor BBX (941 aa).

The segment covering 1-18 has biased composition (basic and acidic residues); that stretch reads MKGSNRNKDHSAEGEGVG. 4 disordered regions span residues 1–21, 39–80, 157–200, and 221–242; these read MKGS…GKRP, FSEE…EQRA, VKSP…FGMA, and TPEV…LRQK. 2 stretches are compositionally biased toward acidic residues: residues 39 to 52 and 63 to 75; these read FSEE…EEDI and LEQD…DDES. Residues 80 to 148 constitute a DNA-binding region (HMG box); the sequence is ARRPMNAFLL…AFMKANPGYK (69 aa). The span at 177-191 shows a compositional bias: basic and acidic residues; sequence SSRDLPSPKKAKTEE. S243 is modified (phosphoserine). Residues 326–370 are a coiled coil; it reads GRIKELEKGKEEKEIKMEKTDETRLQKEAEFEKSAKENLRDSKEL. K385 is covalently cross-linked (Glycyl lysine isopeptide (Lys-Gly) (interchain with G-Cter in SUMO2)). The tract at residues 438–482 is disordered; sequence IEDPAALNKPEKLKKKKKKSKMDRHGNDKSTPKKTCKKRQSSESD. The segment covering 449 to 459 has biased composition (basic residues); sequence KLKKKKKKSKM. 2 positions are modified to phosphoserine: S478 and S485. Composition is skewed to basic and acidic residues over residues 499–508 and 536–552; these read GIEKLGDTPR and KKMS…ESRP. 2 disordered regions span residues 499-600 and 635-677; these read GIEK…SDCH and NVDR…KKTK. K573 participates in a covalent cross-link: Glycyl lysine isopeptide (Lys-Gly) (interchain with G-Cter in SUMO2). Low complexity predominate over residues 661–670; the sequence is TFSQSGTSGS. A Glycyl lysine isopeptide (Lys-Gly) (interchain with G-Cter in SUMO2) cross-link involves residue K696. The residue at position 704 (S704) is a Phosphoserine. Disordered stretches follow at residues 714 to 771, 803 to 888, and 912 to 941; these read PVPR…DKWS, IPSI…SSTP, and HRGQ…CADQ. The span at 723-742 shows a compositional bias: polar residues; it reads GNVSSEPTKTSKGPFQSQKK. A compositionally biased stretch (basic residues) spans 743–757; it reads NLFHKIVSKYKHKKE. Basic and acidic residues predominate over residues 758 to 771; that stretch reads KPNVPEKGSGDKWS. The span at 805-817 shows a compositional bias: polar residues; the sequence is SIFNTPEPTTTQE. Phosphoserine is present on S822. A compositionally biased stretch (basic residues) spans 823 to 834; that stretch reads QKRKARKTKITH. The residue at position 844 (S844) is a Phosphoserine. Residues 866–882 are compositionally biased toward basic and acidic residues; the sequence is TETDCNDKCSHNTEVGE.

The protein resides in the nucleus. Transcription factor that is necessary for cell cycle progression from G1 to S phase. This is HMG box transcription factor BBX (BBX) from Homo sapiens (Human).